We begin with the raw amino-acid sequence, 450 residues long: Phosphoglucosamine mutase (450 aa).

The active-site Phosphoserine intermediate is Ser-102. Residues Ser-102, Asp-243, Asp-245, and Asp-247 each coordinate Mg(2+). At Ser-102 the chain carries Phosphoserine.

Belongs to the phosphohexose mutase family. It depends on Mg(2+) as a cofactor. Post-translationally, activated by phosphorylation.

The catalysed reaction is alpha-D-glucosamine 1-phosphate = D-glucosamine 6-phosphate. Catalyzes the conversion of glucosamine-6-phosphate to glucosamine-1-phosphate. The protein is Phosphoglucosamine mutase of Rhizobium meliloti (strain 1021) (Ensifer meliloti).